We begin with the raw amino-acid sequence, 138 residues long: Large ribosomal subunit protein uL16 (138 aa).

Basic residues predominate over residues 1–17 (MLIPRKVKHRKQHHPRQ). The interval 1 to 24 (MLIPRKVKHRKQHHPRQRGIASGG) is disordered.

This sequence belongs to the universal ribosomal protein uL16 family. Part of the 50S ribosomal subunit.

Its function is as follows. Binds 23S rRNA and is also seen to make contacts with the A and possibly P site tRNAs. This Mycolicibacterium gilvum (strain PYR-GCK) (Mycobacterium gilvum (strain PYR-GCK)) protein is Large ribosomal subunit protein uL16.